We begin with the raw amino-acid sequence, 227 residues long: 7-cyano-7-deazaguanine synthase (227 aa).

8–18 (FSGGQDSTTCL) serves as a coordination point for ATP. Positions 187, 196, 199, and 202 each coordinate Zn(2+).

This sequence belongs to the QueC family. Zn(2+) serves as cofactor.

It catalyses the reaction 7-carboxy-7-deazaguanine + NH4(+) + ATP = 7-cyano-7-deazaguanine + ADP + phosphate + H2O + H(+). Its pathway is purine metabolism; 7-cyano-7-deazaguanine biosynthesis. Its function is as follows. Catalyzes the ATP-dependent conversion of 7-carboxy-7-deazaguanine (CDG) to 7-cyano-7-deazaguanine (preQ(0)). The sequence is that of 7-cyano-7-deazaguanine synthase from Aliivibrio fischeri (strain MJ11) (Vibrio fischeri).